We begin with the raw amino-acid sequence, 406 residues long: Serine/threonine transporter SstT (406 aa).

9 helical membrane-spanning segments follow: residues 11 to 31 (IGLV…GWLM), 45 to 65 (FVGA…MAAI), 79 to 99 (VLIM…VASF), 141 to 161 (AIAN…GLAL), 185 to 205 (FVIA…IAET), 216 to 236 (LLTI…PIIV), 298 to 318 (MAGA…TLGV), 330 to 350 (VVAT…LLLI), and 357 to 377 (FNIP…IGVV).

Belongs to the dicarboxylate/amino acid:cation symporter (DAACS) (TC 2.A.23) family.

The protein localises to the cell inner membrane. The catalysed reaction is L-serine(in) + Na(+)(in) = L-serine(out) + Na(+)(out). It carries out the reaction L-threonine(in) + Na(+)(in) = L-threonine(out) + Na(+)(out). Involved in the import of serine and threonine into the cell, with the concomitant import of sodium (symport system). This chain is Serine/threonine transporter SstT, found in Psychrobacter sp. (strain PRwf-1).